Reading from the N-terminus, the 188-residue chain is Probable RNA 2'-phosphotransferase (188 aa).

This sequence belongs to the KptA/TPT1 family.

Its function is as follows. Removes the 2'-phosphate from RNA via an intermediate in which the phosphate is ADP-ribosylated by NAD followed by a presumed transesterification to release the RNA and generate ADP-ribose 1''-2''-cyclic phosphate (APPR&gt;P). May function as an ADP-ribosylase. The polypeptide is Probable RNA 2'-phosphotransferase (Pseudomonas savastanoi pv. phaseolicola (strain 1448A / Race 6) (Pseudomonas syringae pv. phaseolicola (strain 1448A / Race 6))).